Consider the following 355-residue polypeptide: Peptide chain release factor 1 (355 aa).

Position 230 is an N5-methylglutamine (glutamine 230).

The protein belongs to the prokaryotic/mitochondrial release factor family. Post-translationally, methylated by PrmC. Methylation increases the termination efficiency of RF1.

It is found in the cytoplasm. Its function is as follows. Peptide chain release factor 1 directs the termination of translation in response to the peptide chain termination codons UAG and UAA. This Geobacter sulfurreducens (strain ATCC 51573 / DSM 12127 / PCA) protein is Peptide chain release factor 1.